We begin with the raw amino-acid sequence, 353 residues long: Nuclear hormone receptor family member nhr-27 (353 aa).

Residues 24 to 102 (VSNCVVCGRL…KGMLDLSRYT (79 aa)) constitute a DNA-binding region (nuclear receptor). 2 consecutive NR C4-type zinc fingers follow at residues 27–47 (CVVCGRLTSLFNYGAHSCSAC) and 64–85 (CKYSGNCFENFKRAIHFECKFC). Positions 119-351 (ETLFLTMTVS…SQVHQDVIEF (233 aa)) constitute an NR LBD domain. The tract at residues 340–351 (QPSQVHQDVIEF) is AF-2.

This sequence belongs to the nuclear hormone receptor family.

It is found in the nucleus. Its function is as follows. Ligand-activated transcription factor. Involved in lifespan extension in a manner dependent upon mitochondrial function. The protein is Nuclear hormone receptor family member nhr-27 of Caenorhabditis elegans.